The following is a 349-amino-acid chain: Probable L-asparaginase periplasmic (349 aa).

The N-terminal stretch at 1–21 is a signal peptide; that stretch reads MKLTKLALCTLFGLGVSIANA. Residues 25–349 form the Asparaginase/glutaminase domain; it reads PNITILATGG…KVIQQYFEDF (325 aa). Threonine 35 acts as the O-isoaspartyl threonine intermediate in catalysis. Substrate-binding positions include serine 81 and 112–113; that span reads TD. Cysteine 100 and cysteine 128 are disulfide-bonded.

The protein belongs to the asparaginase 1 family.

It is found in the periplasm. The catalysed reaction is L-asparagine + H2O = L-aspartate + NH4(+). The polypeptide is Probable L-asparaginase periplasmic (ansB) (Haemophilus influenzae (strain ATCC 51907 / DSM 11121 / KW20 / Rd)).